A 152-amino-acid chain; its full sequence is MMKFQDFSSGLYVAAKFSDSTLDEIENLQRELKVPNPVPRHKIHSTICYSRVNVPYVVSTGSFEVANSGELQVWDTQDGRTLVLVLDSDYLKFRHNYARALGATHDFDDYSPHITLSYNVGPAQFSGIVQVPVILDREYKEPLKINWTEDLK.

A 3',3'-cGAMP-binding site is contributed by Tyr-12. Tyr-12 serves as a coordination point for 3',3'-cUAMP. Active-site residues include His-44, Thr-46, His-113, and Thr-115. Residues Glu-141 and Trp-147 each coordinate 3',3'-cGAMP. 2 residues coordinate 3',3'-cUAMP: Glu-141 and Trp-147.

The protein belongs to the anti-CBASS protein Acb1 family.

The enzyme catalyses 3',3'-cUAMP + H2O = U[3'-5']pAp[3'] + H(+). The catalysed reaction is 3',3',3'-c-tri-AMP + H2O = A[3'-5']pA[3'-5']pAp[3'] + H(+). It carries out the reaction 3',3',3'-cAAG + H2O = G[3'-5']pA[3'-5']pAp[3'] + H(+). It catalyses the reaction 3',3',3'-cAAG + H2O = A[3'-5']pG[3'-5']pAp[3'] + H(+). The enzyme catalyses 3',3'-cGAMP + H2O = G[3'-5']pAp[3'] + H(+). Functionally, counteracts the host CBASS antiviral defense system. Phosphodiesterase that enables metal-independent hydrolysis of the host cyclic di- and trinucleotide CBASS signals such as 3'3'-cGAMP, 3'3'cUA, and 3'3'3'-cAAA. Does not cleave cGG or cA4. Besides evasion of the CBASS system, might also enable evasion of the type III CRISPR systems that use cA3 signals. The chain is Anti-CBASS protein Acb1 from Salmonella phage S16 (Salmonella phage vB_SenM-S16).